The following is a 375-amino-acid chain: uncharacterized protein (375 aa).

In terms of domain architecture, Radical SAM core spans 78–302; it reads KKIEITSTIH…IFPNIRITSP (225 aa). Positions 92, 98, and 101 each coordinate [4Fe-4S] cluster.

It depends on [4Fe-4S] cluster as a cofactor.

This is an uncharacterized protein from Methanocaldococcus jannaschii (strain ATCC 43067 / DSM 2661 / JAL-1 / JCM 10045 / NBRC 100440) (Methanococcus jannaschii).